A 164-amino-acid polypeptide reads, in one-letter code: SsrA-binding protein (164 aa).

It belongs to the SmpB family.

The protein resides in the cytoplasm. In terms of biological role, required for rescue of stalled ribosomes mediated by trans-translation. Binds to transfer-messenger RNA (tmRNA), required for stable association of tmRNA with ribosomes. tmRNA and SmpB together mimic tRNA shape, replacing the anticodon stem-loop with SmpB. tmRNA is encoded by the ssrA gene; the 2 termini fold to resemble tRNA(Ala) and it encodes a 'tag peptide', a short internal open reading frame. During trans-translation Ala-aminoacylated tmRNA acts like a tRNA, entering the A-site of stalled ribosomes, displacing the stalled mRNA. The ribosome then switches to translate the ORF on the tmRNA; the nascent peptide is terminated with the 'tag peptide' encoded by the tmRNA and targeted for degradation. The ribosome is freed to recommence translation, which seems to be the essential function of trans-translation. In Shewanella woodyi (strain ATCC 51908 / MS32), this protein is SsrA-binding protein.